We begin with the raw amino-acid sequence, 628 residues long: Phosphomethylpyrimidine synthase (628 aa).

Substrate is bound by residues Asn-228, Met-257, Tyr-286, His-322, 342–344, 383–386, and Glu-422; these read SRG and DGLR. His-426 contributes to the Zn(2+) binding site. Residue Tyr-449 participates in substrate binding. His-490 is a Zn(2+) binding site. [4Fe-4S] cluster contacts are provided by Cys-570, Cys-573, and Cys-578.

This sequence belongs to the ThiC family. As to quaternary structure, homodimer. [4Fe-4S] cluster serves as cofactor.

It carries out the reaction 5-amino-1-(5-phospho-beta-D-ribosyl)imidazole + S-adenosyl-L-methionine = 4-amino-2-methyl-5-(phosphooxymethyl)pyrimidine + CO + 5'-deoxyadenosine + formate + L-methionine + 3 H(+). Its pathway is cofactor biosynthesis; thiamine diphosphate biosynthesis. Functionally, catalyzes the synthesis of the hydroxymethylpyrimidine phosphate (HMP-P) moiety of thiamine from aminoimidazole ribotide (AIR) in a radical S-adenosyl-L-methionine (SAM)-dependent reaction. This chain is Phosphomethylpyrimidine synthase, found in Methylibium petroleiphilum (strain ATCC BAA-1232 / LMG 22953 / PM1).